The following is a 589-amino-acid chain: Protein FAM117B (589 aa).

Residues 1–310 (MSQRVRRNGS…RDKERQSPFH (310 aa)) form a disordered region. Position 10 is a phosphoserine (S10). Positions 16–29 (SLGGGAVATAGGPG) are enriched in gly residues. A compositionally biased stretch (low complexity) spans 45-56 (QQQQQQHGSPTR). Residues 57-85 (SGGGGGGNNNGGCCGGASGPAGGGGGGGP) are compositionally biased toward gly residues. S106 bears the Phosphoserine mark. Residues 108-136 (TVATQTGASATSTRGTSPTRSAAPGARGS) show a composition bias toward low complexity. The span at 137–146 (PPRPPPPPPL) shows a compositional bias: pro residues. 2 stretches are compositionally biased toward low complexity: residues 147 to 158 (LGTVSSPSSSPT) and 207 to 220 (PSSS…RTSS). 4 positions are modified to phosphoserine: S210, S219, S220, and S273. Residues 292–302 (RSKHSSRHHRD) are compositionally biased toward basic residues. A phosphoserine mark is found at S345 and S391. Disordered stretches follow at residues 370 to 464 (QDIP…NNSY) and 556 to 589 (STNT…EAEG). Positions 384-397 (QRSSSTRSIDTQTP) are enriched in polar residues. A compositionally biased stretch (low complexity) spans 404-417 (SNNSSRSQSVSPTS). Phosphoserine is present on residues S449 and S457.

This chain is Protein FAM117B (FAM117B), found in Homo sapiens (Human).